The primary structure comprises 146 residues: Large ribosomal subunit protein uL14 (146 aa).

The protein belongs to the universal ribosomal protein uL14 family.

In Encephalitozoon cuniculi (strain GB-M1) (Microsporidian parasite), this protein is Large ribosomal subunit protein uL14 (RPL23).